Here is a 1250-residue protein sequence, read N- to C-terminus: MARLTAEFGDRIYYNQVMDRGAMRQLIGRLIIYLGSNCTSQILDQLKTLGFRHATQAGISLGVDDLITTPSKTWLIRDAEYQAYTSEEQYRRGSIHAVEKLRHVVETWHTTSEYLKREMTSHFRITDPLNPVHIMSFSGARGNVSQVHQLVGMRGLMANPQGNIIDLPIQSNLREGLSLTEYIISCYGARKGVVDTAVRTADAGYLTRRLVEVVQHVVIRNPDCETNQGIRLHSIRDRKTTRDAGGNSLLSLQERLIGRVLARNVFLGKRCIAIKNQDLAPDLVNSLVNFPKALLSPGSEGGHCEILVRSPLTCKSMPRACQKCYGWDLSCGNLVEIGAAIGIVAGQSIGEPGTQLTLRTFHTGGVFTGGVAEHVRAPFNGIVHFSISSSTHKTKTIQPTRNRHGRPAWTCPEAFSVIIEDRIGKKKVLNVPQYSLLLVKNHQYVQSRQIIAEVRASIAPLKEKIEKNIYSHLQGEVFYNPIGLRASCLKQRHFLHFLCSASRMNLWIEFASIRSYLSPLVEKTSYIWIFSGRLNKFFNATLNLSFFYQTQDYIQRDLPIGIQNHVFNYSKVFLLSIYNRQRSVTFSVSRRDIRLGRKKKFTDYIPLSRISTDKIFSKHTGSIHTISEQNEWILTLSFVDQFSKKMFSSVQTPGTSKVSEKSEEQIIDFQEQLILNYPLSKTTIFLKEPSILAKNYSIAEKDSCIGLLGEFFIFLNELSIVSVRTFISTSQINLFLKKNVFSLLCITHGNTFKGKEKIFFINDSKNIYNIKNWLISVNFLIWCHFSNRILNKNQTLATIFLSNRSLRNEKDLQVKEFKIGQSICPSRDLGEKIFEPFTHSILPESGHLLSLNEGNLLIRLAKLYLIPTGGIAHTFHKQTINEGDTLVTLAYERLKASDIIQGLPKAEQLLEARVGNQVVINLYMRFEILVARIKEQLRNYIGSLTQMDLMLSQISVNRASKALEYSQLETVDQVQKVYLSQGVYISDKHFEVIVRQMSSKIAIVENTDFTAFSPKAVIRTAFPYDVLGVFFPGEILDISKAQKMNRVLYKPLPCKPVLLGITQASLNANSFLSEASFERTITVLSRSALQGRMDWLKGLKENVLLSKMIPAGTGLKQAPVLLSPNGTGTLFSNNEQNIFQKKNVTSLSKSKGQKVQIRKIFSFQKSPQRLSFLYQETSSSNIRRKIQPTVCLCKPFITKRNWLHISLKQLTEQSLNYETKKFCLQELTNNFIPRKKENIFYLKKKTIKTT.

Zn(2+) is bound by residues Cys-224, Cys-314, Cys-321, and Cys-324.

It belongs to the RNA polymerase beta' chain family. RpoC2 subfamily. In terms of assembly, in plastids the minimal PEP RNA polymerase catalytic core is composed of four subunits: alpha, beta, beta', and beta''. When a (nuclear-encoded) sigma factor is associated with the core the holoenzyme is formed, which can initiate transcription. Requires Zn(2+) as cofactor.

The protein resides in the plastid. It is found in the chloroplast. The enzyme catalyses RNA(n) + a ribonucleoside 5'-triphosphate = RNA(n+1) + diphosphate. DNA-dependent RNA polymerase catalyzes the transcription of DNA into RNA using the four ribonucleoside triphosphates as substrates. The sequence is that of DNA-directed RNA polymerase subunit beta'' from Staurastrum punctulatum (Green alga).